A 323-amino-acid polypeptide reads, in one-letter code: CD-NTase-associated protein 12 (323 aa).

The TIR domain occupies 4 to 120 (RIFIGSSSEQ…LDGITVAKFT (117 aa)). Residue E84 is part of the active site. An STING domain region spans residues 154 to 323 (STALAIGYYN…YVNVLTNVKL (170 aa)). Positions 164, 165, 234, 237, 259, 262, and 263 each coordinate 3',3'-c-di-GMP.

It in the C-terminal section; belongs to the bacterial STING family. As to quaternary structure, forms homodimers which subsequently form filaments. In vitro in the presence of c-di-GMP forms filaments up to 300 nm in length with an ordered array of parallel-stacked subunits, where the TIR domains form one face of the filament and the STING domains form the other face. Antiparallel double-filament structures are also seen. 3'3'-cGAMP weakly induces filament formation, while 2'3'-cGAMP does not.

It carries out the reaction NAD(+) + H2O = ADP-D-ribose + nicotinamide + H(+). Its activity is regulated as follows. NAD(+) hydrolase activity is strongly stimulated by c-di-GMP, weakly by 3'3'-cGAMP, very weakly by c-di-AMP and not at all by 2'3'-cGAMP. Self-association of TIR domains is required for NADase activity. Its function is as follows. Effector protein of a CBASS antiviral system with NAD(+) hydrolase activity. CBASS (cyclic oligonucleotide-based antiphage signaling system) provides immunity against bacteriophage. The CD-NTase protein synthesizes cyclic nucleotides in response to infection; these serve as specific second messenger signals. The signals activate a diverse range of effectors, leading to bacterial cell death and thus abortive phage infection. A type I-D(GG) CBASS system. Functionally, upon activation by 3'3'-c-di-GMP forms filaments which hydrolyze NAD(+); filament formation is required for enzyme activation. Induction in an E.coli strain that synthesizes c-di-GMP leads to significant growth inhibition. Binds c-di-GMP and 3'3'-cGAMP (3'3'-cyclic GMP-AMP), but not c-di-AMP, 2'3'-cGAMP or cUMP-AMP. This chain is CD-NTase-associated protein 12, found in Sphingobacterium faecium (strain DSM 11690 / JCM 21820 / NBRC 15299 / NCIMB 13408 / KS 0470).